A 93-amino-acid chain; its full sequence is DNA-directed RNA polymerase subunit omega (93 aa).

This sequence belongs to the RNA polymerase subunit omega family. As to quaternary structure, the RNAP catalytic core consists of 2 alpha, 1 beta, 1 beta' and 1 omega subunit. When a sigma factor is associated with the core the holoenzyme is formed, which can initiate transcription.

The enzyme catalyses RNA(n) + a ribonucleoside 5'-triphosphate = RNA(n+1) + diphosphate. Functionally, promotes RNA polymerase assembly. Latches the N- and C-terminal regions of the beta' subunit thereby facilitating its interaction with the beta and alpha subunits. This is DNA-directed RNA polymerase subunit omega from Corynebacterium urealyticum (strain ATCC 43042 / DSM 7109).